The chain runs to 133 residues: Cytochrome c-type biogenesis protein CcmE (133 aa).

Residues 1–7 (MKRKHKR) are Cytoplasmic-facing. Residues 8-28 (LLFIIVTFIIFGSSVVIVLNK) form a helical; Signal-anchor for type II membrane protein membrane-spanning segment. At 29 to 133 (LRSNISFFFT…NYKPGKYRAK (105 aa)) the chain is on the periplasmic side. Heme is bound by residues His121 and Tyr125.

It belongs to the CcmE/CycJ family.

The protein localises to the cell inner membrane. Functionally, heme chaperone required for the biogenesis of c-type cytochromes. Transiently binds heme delivered by CcmC and transfers the heme to apo-cytochromes in a process facilitated by CcmF and CcmH. The sequence is that of Cytochrome c-type biogenesis protein CcmE from Ehrlichia canis (strain Jake).